The chain runs to 122 residues: Large ribosomal subunit protein uL14 (122 aa).

It belongs to the universal ribosomal protein uL14 family. In terms of assembly, part of the 50S ribosomal subunit. Forms a cluster with proteins L3 and L19. In the 70S ribosome, L14 and L19 interact and together make contacts with the 16S rRNA in bridges B5 and B8.

Functionally, binds to 23S rRNA. Forms part of two intersubunit bridges in the 70S ribosome. In Halothermothrix orenii (strain H 168 / OCM 544 / DSM 9562), this protein is Large ribosomal subunit protein uL14.